We begin with the raw amino-acid sequence, 411 residues long: Floricaula/leafy-like protein (411 aa).

Positions 220-259 (PDTNYGSEQTKACKKQKRRRSKDSGEDGEERQREHPFIVT) are disordered. Residues 231-240 (ACKKQKRRRS) show a composition bias toward basic residues. Residues 241–255 (KDSGEDGEERQREHP) show a composition bias toward basic and acidic residues. 3 consecutive DNA-binding regions follow at residues 252-256 (REHPF), 321-328 (NKPKMRHY), and 392-395 (YVPT).

The protein belongs to the FLO/LFY family. In terms of tissue distribution, expressed in vegetative buds and male cones but not in female cones, vascular tissue, roots or secondary needles.

The protein localises to the nucleus. Its function is as follows. Probable transcription factor. The sequence is that of Floricaula/leafy-like protein (FLL) from Pinus radiata (Monterey pine).